A 219-amino-acid chain; its full sequence is Ras-related protein Rab-3 (219 aa).

GTP-binding positions include 29 to 37 (GNSSVGKTS), 48 to 54 (TSAFVST), 77 to 81 (DTAGQ), 135 to 138 (NKCD), and 165 to 167 (SAK). The short motif at 51–59 (FVSTVGIDF) is the Effector region element. The disordered stretch occupies residues 191–219 (LDKDPQQQPKGQKLEANPTQKPAQQQCNC). Residues 207–219 (NPTQKPAQQQCNC) show a composition bias toward polar residues. Residues C217 and C219 are each lipidated (S-geranylgeranyl cysteine). C219 carries the post-translational modification Cysteine methyl ester.

Belongs to the small GTPase superfamily. Rab family.

The protein localises to the cell membrane. Involved in exocytosis by regulating a late step in synaptic vesicle fusion. Could play a role in neurotransmitter release by regulating membrane flow in the nerve terminal. Plays a role in the recruitment of endophilin unc-57 to synaptic vesicles. Probably by controlling dense-core vesicle trafficking, plays a role in the AVG neuron-mediated formation of the right axon tract of the ventral nerve cord. The polypeptide is Ras-related protein Rab-3 (rab-3) (Caenorhabditis elegans).